Consider the following 206-residue polypeptide: RNA-binding protein (206 aa).

A disordered region spans residues 87 to 206 (PRGMQRGNRR…SGAKSKRRPR (120 aa)). Residues 109 to 132 (MPKDDSNDRKKAKTSKDRKVEKSS) are compositionally biased toward basic and acidic residues.

The protein belongs to the phytoreovirus RNA-binding protein family.

Its subcellular location is the host cytoplasm. Functionally, constituent of viral factories. Binds to ssRNA and dsRNA. The chain is RNA-binding protein from Rice gall dwarf virus (RGDV).